A 40-amino-acid polypeptide reads, in one-letter code: Photosystem II reaction center protein T (40 aa).

The chain crosses the membrane as a helical span at residues 3-23 (ALVYTFLLVGTLGIIFFAIFF).

This sequence belongs to the PsbT family. As to quaternary structure, PSII is composed of 1 copy each of membrane proteins PsbA, PsbB, PsbC, PsbD, PsbE, PsbF, PsbH, PsbI, PsbJ, PsbK, PsbL, PsbM, PsbT, PsbY, PsbZ, Psb30/Ycf12, at least 3 peripheral proteins of the oxygen-evolving complex and a large number of cofactors. It forms dimeric complexes.

The protein localises to the plastid. Its subcellular location is the chloroplast thylakoid membrane. Its function is as follows. Found at the monomer-monomer interface of the photosystem II (PS II) dimer, plays a role in assembly and dimerization of PSII. PSII is a light-driven water plastoquinone oxidoreductase, using light energy to abstract electrons from H(2)O, generating a proton gradient subsequently used for ATP formation. The polypeptide is Photosystem II reaction center protein T (Anthoceros angustus (Hornwort)).